The chain runs to 356 residues: S-adenosylmethionine:tRNA ribosyltransferase-isomerase (356 aa).

The protein belongs to the QueA family. As to quaternary structure, monomer.

The protein localises to the cytoplasm. The catalysed reaction is 7-aminomethyl-7-carbaguanosine(34) in tRNA + S-adenosyl-L-methionine = epoxyqueuosine(34) in tRNA + adenine + L-methionine + 2 H(+). It participates in tRNA modification; tRNA-queuosine biosynthesis. In terms of biological role, transfers and isomerizes the ribose moiety from AdoMet to the 7-aminomethyl group of 7-deazaguanine (preQ1-tRNA) to give epoxyqueuosine (oQ-tRNA). The protein is S-adenosylmethionine:tRNA ribosyltransferase-isomerase of Histophilus somni (strain 2336) (Haemophilus somnus).